The sequence spans 400 residues: Subtilisin-like protease 1 (400 aa).

The N-terminal stretch at 1–20 is a signal peptide; the sequence is MKFSQSLIALAACFLPLIAA. Positions 21-119 are excised as a propeptide; the sequence is APVEAQHAKI…IEMDGKVQAN (99 aa). Positions 42 to 117 constitute an Inhibitor I9 domain; it reads SYIVVFNKGV…AWIEMDGKVQ (76 aa). N-linked (GlcNAc...) asparagine glycosylation is present at asparagine 82. Residues 128-400 form the Peptidase S8 domain; sequence TWGLGRISHK…NLIAYNGNGA (273 aa). Catalysis depends on charge relay system residues aspartate 160, histidine 192, and serine 345.

The protein belongs to the peptidase S8 family.

The protein resides in the secreted. Its function is as follows. Major secreted subtilisin-like serine endopeptidase. Mediates the degradation of collagen, the major structural protein in the mammalian host. Degrades the nonhelical regions of collagen that function in the cross-linking of the helical components. May function as virulence factor involved in epidermal wing necrosis observed in white nose syndrome (WNS) in bats. This is Subtilisin-like protease 1 from Pseudogymnoascus destructans (strain ATCC MYA-4855 / 20631-21) (Bat white-nose syndrome fungus).